The following is a 224-amino-acid chain: Propanediol dehydratase medium subunit (224 aa).

A targets protein to the BMC region spans residues 1–18; that stretch reads MEINEKLLRQIIEDVLRD.

This sequence belongs to the diol/glycerol dehydratase medium subunit family. The propanediol dehydratase enzyme is a heterotrimeric complex composed of a large (PduC), a medium (PduD) and a small (PduE) subunit. Requires adenosylcob(III)alamin as cofactor.

It is found in the bacterial microcompartment. The enzyme catalyses propane-1,2-diol = propanal + H2O. The protein operates within polyol metabolism; 1,2-propanediol degradation. Its activity is regulated as follows. Inhibited by glycerol. In terms of biological role, part of the PduCDE complex that catalyzes the dehydration of 1,2-propanediol (1,2-PD) to propionaldehyde. Required for S.typhimurium growth on 1,2-PD as the sole carbon and energy source. This subunit is directly targeted to the bacterial microcompartment (BMC) dedicated to 1,2-PD degradation, and is also responsible for targeting the other 2 subunits (pduC and pduE). Functionally, the 1,2-PD-specific bacterial microcompartment (BMC) concentrates low levels of 1,2-PD catabolic enzymes, concentrates volatile reaction intermediates thus enhancing pathway flux and keeps the level of toxic, mutagenic propionaldehyde low. The chain is Propanediol dehydratase medium subunit from Salmonella typhimurium (strain LT2 / SGSC1412 / ATCC 700720).